The following is a 246-amino-acid chain: MIRFLIPTAKEMKPSKEVPSQKLSEKSEAILTEMAKLSTDDLSIAYKIKPEQAEKEKQRWDAILAGEAKNYPAVELFNGLMYRHIKRKDLSTCEKDFLSHQVFITSSFYGIIPAFYPIQEHRHDFHTKVKVNGQSLKNYWRAEYDQFLEESQVPVVSLLSSEFEDVFSPSLRKQLFTVSFMEDRNGILKTHSTISKKARGAFLTAVMEESCQTIDALRDLSFDDFYYRKDLSSDSELFFVRKVKKV.

The protein belongs to the UPF0246 family.

The sequence is that of UPF0246 protein str1967 from Streptococcus thermophilus (strain CNRZ 1066).